The following is a 299-amino-acid chain: MRISGQGVLLSLAASVLFVTLPGYVHLLEPLDSLQVVAHRVVWSIPMVFLLVVATRQWPTLRAAWCRLFAEPWLLACFPLTAAMMLLQWGIFIWAPLAGKTLELSLGYFLLPLAMVLVGRVFYGERLTPLQAIAVACALAGVLHEFWLTRAFSWVSLVTALGYPPYFMLRRRMGVDALSGFVFEMLFLLPLALAALYWLGDESQAFREAPRLWLLLPMLGLISALAFGAMMASSRLLPMGLFGILSYVEPVLLFLVAVLFLGEAFRPEQLWTYAPIWLAVLLTGWDSARLLRKQARRGI.

10 consecutive transmembrane segments (helical) span residues 8 to 28 (VLLS…VHLL), 34 to 54 (LQVV…LVVA), 74 to 94 (LLAC…IFIW), 104 to 124 (LSLG…VFYG), 126 to 146 (RLTP…LHEF), 147 to 167 (WLTR…PPYF), 180 to 200 (GFVF…YWLG), 212 to 232 (LWLL…AMMA), 241 to 261 (LFGI…VLFL), and 271 to 291 (WTYA…ARLL).

It belongs to the EamA transporter family.

It is found in the cell membrane. The polypeptide is Chloramphenicol-sensitive protein RarD (rarD) (Pseudomonas aeruginosa (strain ATCC 15692 / DSM 22644 / CIP 104116 / JCM 14847 / LMG 12228 / 1C / PRS 101 / PAO1)).